The sequence spans 168 residues: S-ribosylhomocysteine lyase (168 aa).

Fe cation is bound by residues His-54, His-58, and Cys-128.

Belongs to the LuxS family. As to quaternary structure, homodimer. The cofactor is Fe cation.

It catalyses the reaction S-(5-deoxy-D-ribos-5-yl)-L-homocysteine = (S)-4,5-dihydroxypentane-2,3-dione + L-homocysteine. Involved in the synthesis of autoinducer 2 (AI-2) which is secreted by bacteria and is used to communicate both the cell density and the metabolic potential of the environment. The regulation of gene expression in response to changes in cell density is called quorum sensing. Catalyzes the transformation of S-ribosylhomocysteine (RHC) to homocysteine (HC) and 4,5-dihydroxy-2,3-pentadione (DPD). This is S-ribosylhomocysteine lyase from Neisseria gonorrhoeae (strain ATCC 700825 / FA 1090).